We begin with the raw amino-acid sequence, 140 residues long: Large ribosomal subunit protein uL11 (140 aa).

It belongs to the universal ribosomal protein uL11 family. As to quaternary structure, part of the ribosomal stalk of the 50S ribosomal subunit. Interacts with L10 and the large rRNA to form the base of the stalk. L10 forms an elongated spine to which L12 dimers bind in a sequential fashion forming a multimeric L10(L12)X complex. In terms of processing, one or more lysine residues are methylated.

In terms of biological role, forms part of the ribosomal stalk which helps the ribosome interact with GTP-bound translation factors. The protein is Large ribosomal subunit protein uL11 of Geotalea daltonii (strain DSM 22248 / JCM 15807 / FRC-32) (Geobacter daltonii).